The primary structure comprises 303 residues: Thyrotroph embryonic factor (303 aa).

Disordered stretches follow at residues 1–63 and 132–176; these read MSDA…KLEE and ESAS…DPNC. Serine 32 is subject to Phosphoserine. The segment covering 41–61 has biased composition (basic and acidic residues); sequence KLMENPPREARLDKEKGKEKL. The segment covering 133–160 has biased composition (low complexity); it reads SASSSTASPPSSSTAIFQPSETVSSTES. In terms of domain architecture, bZIP spans 233–296; that stretch reads DEKYWTRRKK…GKCKTIVSKY (64 aa). The segment at 235 to 255 is basic motif; it reads KYWTRRKKNNVAAKRSRDARR. The tract at residues 256-263 is leucine-zipper; the sequence is LKENQITI.

The protein belongs to the bZIP family. PAR subfamily. As to quaternary structure, binds DNA as a homodimer or a heterodimer. Can form a heterodimer with DBP.

Its subcellular location is the nucleus. Transcription factor that binds to and transactivates the TSHB promoter. Binds to a minimal DNA-binding sequence 5'-[TC][AG][AG]TTA[TC][AG]-3'. The sequence is that of Thyrotroph embryonic factor (TEF) from Homo sapiens (Human).